The primary structure comprises 223 residues: DNA-directed RNA polymerase III subunit RPC7 (223 aa).

Residues 111–124 (MMPRKKCKKGDPKS) are compositionally biased toward basic and acidic residues. The interval 111 to 223 (MMPRKKCKKG…SDDNMDEATY (113 aa)) is disordered. A Phosphothreonine modification is found at Thr-134. The segment covering 144 to 156 (KTIEELEKRGEGE) has biased composition (basic and acidic residues). Residue Ser-158 is modified to Phosphoserine. 2 stretches are compositionally biased toward acidic residues: residues 173–198 (KDDE…EEND) and 206–223 (NGDD…EATY).

This sequence belongs to the eukaryotic RPC7 RNA polymerase subunit family. Component of the RNA polymerase III complex consisting of 17 subunits: a ten-subunit horseshoe-shaped catalytic core composed of POLR3A/RPC1, POLR3B/RPC2, POLR1C/RPAC1, POLR1D/RPAC2, POLR3K/RPC10, POLR2E/RPABC1, POLR2F/RPABC2, POLR2H/RPABC3, POLR2K/RPABC4 and POLR2L/RPABC5; a mobile stalk composed of two subunits POLR3H/RPC8 and CRCP/RPC9, protruding from the core and functioning primarily in transcription initiation; and additional subunits homologous to general transcription factors of the RNA polymerase II machinery, POLR3C/RPC3-POLR3F/RPC6-POLR3G/RPC7 heterotrimer required for transcription initiation and POLR3D/RPC4-POLR3E/RPC5 heterodimer involved in both transcription initiation and termination. Directly interacts with POLR3C/RPC62. Also found in a trimeric complex with POLR3C/RPC3 and POLR3GL. In terms of tissue distribution, expressed at low levels in the liver.

Its subcellular location is the nucleus. It is found in the cytoplasm. Its function is as follows. DNA-dependent RNA polymerase catalyzes the transcription of DNA into RNA using the four ribonucleoside triphosphates as substrates. Specific peripheric component of RNA polymerase III (Pol III) which synthesizes small non-coding RNAs including 5S rRNA, snRNAs, tRNAs and miRNAs from at least 500 distinct genomic loci. Acts as a long tether that bridges POLR3C/RPC3-POLR3F/RPC6-POLR3G/RPC7 heterotrimer and the mobile stalk of Pol III, coordinating the dynamics of Pol III stalk and clamp modules during the transition from apo to elongation state. Pol III exists as two alternative complexes defined by the mutually exclusive incorporation of subunit POLR3G/RPC7alpha or POLR3GL/RPC7beta. POLR3G/RPC7alpha modulates Pol III transcriptome by specifically enhancing the transcription of snaR-A non-coding RNAs. At resting state, occupies the active site of apo Pol III and keeps Pol III in an autoinhibitory mode, preventing non-specific transcription. Pol III plays a key role in sensing and limiting infection by intracellular bacteria and DNA viruses. Acts as a nuclear and cytosolic DNA sensor involved in innate immune response. Can sense non-self dsDNA that serves as template for transcription into dsRNA. The non-self RNA polymerase III transcripts, such as Epstein-Barr virus-encoded RNAs (EBERs), induce type I interferon and NF-kappa-B through the RIG-I pathway. The sequence is that of DNA-directed RNA polymerase III subunit RPC7 (Polr3g) from Mus musculus (Mouse).